The following is a 546-amino-acid chain: Probable bifunctional SAT/APS kinase (546 aa).

A sulfate adenylyltransferase region spans residues 1-370 (MEKIKYLKSI…LAETYVPKHK (370 aa)). The interval 371–546 (QGFCVWLTGL…FLKKEGFIKD (176 aa)) is adenylsulfate kinase. 379 to 386 (GLPCAGKS) lines the ATP pocket. Residue S453 is the Phosphoserine intermediate of the active site.

In the N-terminal section; belongs to the sulfate adenylyltransferase family. This sequence in the C-terminal section; belongs to the APS kinase family.

The catalysed reaction is sulfate + ATP + H(+) = adenosine 5'-phosphosulfate + diphosphate. It catalyses the reaction adenosine 5'-phosphosulfate + ATP = 3'-phosphoadenylyl sulfate + ADP + H(+). The protein operates within sulfur metabolism; hydrogen sulfide biosynthesis; sulfite from sulfate: step 1/3. Its pathway is sulfur metabolism; hydrogen sulfide biosynthesis; sulfite from sulfate: step 2/3. The polypeptide is Probable bifunctional SAT/APS kinase (sat/cysC) (Aquifex aeolicus (strain VF5)).